The following is a 362-amino-acid chain: Aminomethyltransferase (362 aa).

Belongs to the GcvT family. As to quaternary structure, the glycine cleavage system is composed of four proteins: P, T, L and H.

The enzyme catalyses N(6)-[(R)-S(8)-aminomethyldihydrolipoyl]-L-lysyl-[protein] + (6S)-5,6,7,8-tetrahydrofolate = N(6)-[(R)-dihydrolipoyl]-L-lysyl-[protein] + (6R)-5,10-methylene-5,6,7,8-tetrahydrofolate + NH4(+). The glycine cleavage system catalyzes the degradation of glycine. This chain is Aminomethyltransferase, found in Pseudothermotoga lettingae (strain ATCC BAA-301 / DSM 14385 / NBRC 107922 / TMO) (Thermotoga lettingae).